Here is a 265-residue protein sequence, read N- to C-terminus: 3-methyl-2-oxobutanoate hydroxymethyltransferase (265 aa).

Positions 45 and 84 each coordinate Mg(2+). 3-methyl-2-oxobutanoate contacts are provided by residues 45-46, D84, and K112; that span reads DS. E114 provides a ligand contact to Mg(2+). E181 serves as the catalytic Proton acceptor.

It belongs to the PanB family. In terms of assembly, homodecamer; pentamer of dimers. Mg(2+) serves as cofactor.

Its subcellular location is the cytoplasm. It catalyses the reaction 3-methyl-2-oxobutanoate + (6R)-5,10-methylene-5,6,7,8-tetrahydrofolate + H2O = 2-dehydropantoate + (6S)-5,6,7,8-tetrahydrofolate. Its pathway is cofactor biosynthesis; (R)-pantothenate biosynthesis; (R)-pantoate from 3-methyl-2-oxobutanoate: step 1/2. Functionally, catalyzes the reversible reaction in which hydroxymethyl group from 5,10-methylenetetrahydrofolate is transferred onto alpha-ketoisovalerate to form ketopantoate. The chain is 3-methyl-2-oxobutanoate hydroxymethyltransferase from Yersinia pseudotuberculosis serotype IB (strain PB1/+).